The chain runs to 326 residues: DNA-directed RNA polymerase subunit alpha (326 aa).

Positions 1 to 231 (MQTALLKPKI…DQLSVFAALE (231 aa)) are alpha N-terminal domain (alpha-NTD). Positions 247-326 (IDPILLRPVD…ENWPPAGLDK (80 aa)) are alpha C-terminal domain (alpha-CTD).

This sequence belongs to the RNA polymerase alpha chain family. In terms of assembly, homodimer. The RNAP catalytic core consists of 2 alpha, 1 beta, 1 beta' and 1 omega subunit. When a sigma factor is associated with the core the holoenzyme is formed, which can initiate transcription.

The enzyme catalyses RNA(n) + a ribonucleoside 5'-triphosphate = RNA(n+1) + diphosphate. In terms of biological role, DNA-dependent RNA polymerase catalyzes the transcription of DNA into RNA using the four ribonucleoside triphosphates as substrates. The chain is DNA-directed RNA polymerase subunit alpha from Cupriavidus pinatubonensis (strain JMP 134 / LMG 1197) (Cupriavidus necator (strain JMP 134)).